We begin with the raw amino-acid sequence, 232 residues long: T-cell surface glycoprotein CD1b-3 (232 aa).

The Extracellular portion of the chain corresponds to 1–201 (GLQEFQFEYP…LYWGHPMYIG (201 aa)). Disulfide bonds link cysteine 19–cysteine 83, cysteine 48–cysteine 62, and cysteine 123–cysteine 178. N-linked (GlcNAc...) asparagine glycosylation is present at asparagine 45. An Ig-like domain is found at 84 to 194 (PRYLLGVLDA…LGDQDIILYW (111 aa)). Residues 202–222 (LIFVAIIVPSLILLICLALWF) form a helical membrane-spanning segment. Residues 223–232 (WRRWSYQTVL) lie on the Cytoplasmic side of the membrane.

In terms of assembly, heterodimer with B2M (beta-2-microglobulin). Interacts with saposin C.

Its subcellular location is the cell membrane. The protein resides in the endosome membrane. The protein localises to the lysosome membrane. Antigen-presenting protein that binds self and non-self lipid and glycolipid antigens and presents them to T-cell receptors on natural killer T-cells. This Ovis aries (Sheep) protein is T-cell surface glycoprotein CD1b-3.